Here is a 662-residue protein sequence, read N- to C-terminus: ATP-dependent zinc metalloprotease YME1 homolog (662 aa).

An ATP-binding site is contributed by 206 to 213 (GPPGVGKT). Residue His-425 coordinates Zn(2+). Glu-426 is an active-site residue. 2 residues coordinate Zn(2+): His-429 and Asp-503.

It in the N-terminal section; belongs to the AAA ATPase family. The protein in the C-terminal section; belongs to the peptidase M41 family. Zn(2+) serves as cofactor.

In terms of biological role, putative ATP-dependent protease. The chain is ATP-dependent zinc metalloprotease YME1 homolog from Schistosoma mansoni (Blood fluke).